A 181-amino-acid chain; its full sequence is Adenine phosphoribosyltransferase 1 (181 aa).

Belongs to the purine/pyrimidine phosphoribosyltransferase family. Homodimer.

The protein localises to the cytoplasm. It carries out the reaction AMP + diphosphate = 5-phospho-alpha-D-ribose 1-diphosphate + adenine. It functions in the pathway purine metabolism; AMP biosynthesis via salvage pathway; AMP from adenine: step 1/1. Its function is as follows. Catalyzes a salvage reaction resulting in the formation of AMP, that is energically less costly than de novo synthesis. This chain is Adenine phosphoribosyltransferase 1 (APT1), found in Triticum aestivum (Wheat).